The following is a 492-amino-acid chain: 2,3-bisphosphoglycerate-independent phosphoglycerate mutase (492 aa).

Asp11 and Ser61 together coordinate Mn(2+). Catalysis depends on Ser61, which acts as the Phosphoserine intermediate. Substrate contacts are provided by residues His118, 147–148 (RD), Arg178, Arg184, 248–251 (RNDR), and Lys320. The Mn(2+) site is built by Asp386, His390, Asp427, His428, and His445.

Belongs to the BPG-independent phosphoglycerate mutase family. As to quaternary structure, monomer. Mn(2+) serves as cofactor.

It catalyses the reaction (2R)-2-phosphoglycerate = (2R)-3-phosphoglycerate. It participates in carbohydrate degradation; glycolysis; pyruvate from D-glyceraldehyde 3-phosphate: step 3/5. In terms of biological role, catalyzes the interconversion of 2-phosphoglycerate and 3-phosphoglycerate. This chain is 2,3-bisphosphoglycerate-independent phosphoglycerate mutase, found in Campylobacter jejuni subsp. jejuni serotype O:23/36 (strain 81-176).